Here is a 280-residue protein sequence, read N- to C-terminus: 4-deoxy-L-threo-5-hexosulose-uronate ketol-isomerase (280 aa).

His-198, His-200, Glu-205, and His-247 together coordinate Zn(2+).

Belongs to the KduI family. Zn(2+) is required as a cofactor.

The protein resides in the cytoplasm. It catalyses the reaction 5-dehydro-4-deoxy-D-glucuronate = 3-deoxy-D-glycero-2,5-hexodiulosonate. Its function is as follows. Isomerase involved in ulvan degradation. Ulvan is the main polysaccharide component of the Ulvales (green seaweed) cell wall. It is composed of disaccharide building blocks comprising 3-sulfated rhamnose (Rha3S) linked to D-glucuronic acid (GlcA), L-iduronic acid (IduA), or D-xylose (Xyl). Catalyzes the isomerization of 5-dehydro-4-deoxy-D-glucuronate to 3-deoxy-D-glycero-2,5-hexodiulosonate. This Formosa agariphila (strain DSM 15362 / KCTC 12365 / LMG 23005 / KMM 3901 / M-2Alg 35-1) protein is 4-deoxy-L-threo-5-hexosulose-uronate ketol-isomerase.